The chain runs to 711 residues: Early transcription factor 82 kDa subunit (711 aa).

This sequence belongs to the poxviridae VETF large subunit family. In terms of assembly, heterodimer of a 70 kDa and a 82 kDa subunit. Part of the early transcription complex composed of ETF, RAP94, and the DNA-directed RNA polymerase.

The protein resides in the virion. Its function is as follows. Acts with RNA polymerase to initiate transcription from early gene promoters. Is recruited by the RPO-associated protein of 94 kDa (RAP94) to form the early transcription complex, which also contains the core RNA polymerase. ETF heterodimer binds to early gene promoters. In Oryctolagus cuniculus (Rabbit), this protein is Early transcription factor 82 kDa subunit (VETFL).